The primary structure comprises 248 residues: Uridylate kinase (248 aa).

15–18 contacts ATP; sequence KLSG. Residues 23-28 form an involved in allosteric activation by GTP region; it reads GAEGFG. Residue G57 coordinates UMP. Residues G58 and R62 each contribute to the ATP site. Residues D77 and 138-145 contribute to the UMP site; that span reads TGNPFFTT. ATP is bound by residues T165, Y171, and D174.

The protein belongs to the UMP kinase family. In terms of assembly, homohexamer.

The protein resides in the cytoplasm. The enzyme catalyses UMP + ATP = UDP + ADP. Its pathway is pyrimidine metabolism; CTP biosynthesis via de novo pathway; UDP from UMP (UMPK route): step 1/1. With respect to regulation, allosterically activated by GTP. Inhibited by UTP. In terms of biological role, catalyzes the reversible phosphorylation of UMP to UDP. This is Uridylate kinase from Yersinia enterocolitica serotype O:8 / biotype 1B (strain NCTC 13174 / 8081).